Consider the following 491-residue polypeptide: 3-octaprenyl-4-hydroxybenzoate carboxy-lyase (491 aa).

Position 172 (asparagine 172) interacts with Mn(2+). Prenylated FMN contacts are provided by residues 175–177 (IYR), 189–191 (RWL), and 194–195 (RG). Glutamate 238 serves as a coordination point for Mn(2+). Aspartate 287 (proton donor) is an active-site residue.

Belongs to the UbiD family. Homohexamer. The cofactor is prenylated FMN. Requires Mn(2+) as cofactor.

The protein resides in the cell membrane. It catalyses the reaction a 4-hydroxy-3-(all-trans-polyprenyl)benzoate + H(+) = a 2-(all-trans-polyprenyl)phenol + CO2. The protein operates within cofactor biosynthesis; ubiquinone biosynthesis. Its function is as follows. Catalyzes the decarboxylation of 3-octaprenyl-4-hydroxy benzoate to 2-octaprenylphenol, an intermediate step in ubiquinone biosynthesis. This Alcanivorax borkumensis (strain ATCC 700651 / DSM 11573 / NCIMB 13689 / SK2) protein is 3-octaprenyl-4-hydroxybenzoate carboxy-lyase.